The following is a 334-amino-acid chain: MDQTLIQEILEIVEQAAIASASLSGKGLKDEADALAVDAMRKRMNQIQMQGRIVIGEGERDEAPMLYIGEEVGTGTGPGVDFAVDPCEGTNLCAFNQRGSMAVLAASDRGGLFNAPDFYMKKLAAPPAAKGKVDIRKSATENIKILSECLGLPVDELNIVVMDRARHKDLIAEIRGTGARIQPISDGDVQAAIACGFAGTGTHCLMGIGAAPEGVISAAAMRALGGHFQGQLVYDPAIAQTSEWADMTKEGNLARLAEMGIADPDKVYEAEELACGEHVCFAGSGITDGLLFNGVKFEKDCTRTSSLVISNLDNTCRFTNTVHIKEDAQSIALS.

Positions 33, 57, 85, and 88 each coordinate Mn(2+). Substrate is bound by residues glutamate 88–threonine 90, tyrosine 119, arginine 164–arginine 166, and aspartate 186–aspartate 188. A Mn(2+)-binding site is contributed by glutamate 213.

Belongs to the FBPase class 2 family. As to quaternary structure, homotetramer. Mn(2+) is required as a cofactor.

The catalysed reaction is beta-D-fructose 1,6-bisphosphate + H2O = beta-D-fructose 6-phosphate + phosphate. It carries out the reaction D-sedoheptulose 1,7-bisphosphate + H2O = D-sedoheptulose 7-phosphate + phosphate. It functions in the pathway carbohydrate biosynthesis; Calvin cycle. Its function is as follows. Catalyzes the hydrolysis of fructose 1,6-bisphosphate (Fru 1,6-P2) and sedoheptulose 1,7-bisphosphate (Sed 1,7-P2) to fructose 6-phosphate and sedoheptulose 7-phosphate, respectively. This is D-fructose 1,6-bisphosphatase class 2/sedoheptulose 1,7-bisphosphatase from Synechococcus sp. (strain CC9605).